The following is a 318-amino-acid chain: L-lactate dehydrogenase (318 aa).

NAD(+)-binding positions include Val-18, Asp-39, Lys-44, Tyr-69, and 83–84 (GA). 2 residues coordinate substrate: Gln-86 and Arg-92. NAD(+) contacts are provided by residues Ser-105, 122-124 (VSN), and Ser-147. Position 124–127 (124–127 (NPVD)) interacts with substrate. 152-155 (DTSR) contacts substrate. His-179 serves as the catalytic Proton acceptor. A Phosphotyrosine modification is found at Tyr-225. Thr-234 contributes to the substrate binding site.

This sequence belongs to the LDH/MDH superfamily. LDH family. Homotetramer.

The protein localises to the cytoplasm. It catalyses the reaction (S)-lactate + NAD(+) = pyruvate + NADH + H(+). Its pathway is fermentation; pyruvate fermentation to lactate; (S)-lactate from pyruvate: step 1/1. Catalyzes the conversion of lactate to pyruvate. This is L-lactate dehydrogenase from Clostridium botulinum (strain Kyoto / Type A2).